The chain runs to 377 residues: Chorismate synthase (377 aa).

NADP(+) is bound by residues R48 and R54. FMN-binding positions include R125–S127, N238–A239, G278, K293–S297, and R319.

It belongs to the chorismate synthase family. Homotetramer. The cofactor is FMNH2.

The enzyme catalyses 5-O-(1-carboxyvinyl)-3-phosphoshikimate = chorismate + phosphate. It functions in the pathway metabolic intermediate biosynthesis; chorismate biosynthesis; chorismate from D-erythrose 4-phosphate and phosphoenolpyruvate: step 7/7. Catalyzes the anti-1,4-elimination of the C-3 phosphate and the C-6 proR hydrogen from 5-enolpyruvylshikimate-3-phosphate (EPSP) to yield chorismate, which is the branch point compound that serves as the starting substrate for the three terminal pathways of aromatic amino acid biosynthesis. This reaction introduces a second double bond into the aromatic ring system. The polypeptide is Chorismate synthase (Aromatoleum aromaticum (strain DSM 19018 / LMG 30748 / EbN1) (Azoarcus sp. (strain EbN1))).